The primary structure comprises 257 residues: Cobalt transport protein CbiM (257 aa).

The first 33 residues, 1–33, serve as a signal peptide directing secretion; sequence MVKPTQAKRYASLGAIALLTTSLVVASPNPALA. The next 6 membrane-spanning stretches (helical) occupy residues 39 to 59, 74 to 94, 117 to 137, 138 to 158, 171 to 191, and 214 to 234; these read GFLP…FLAW, SVLL…LKIP, LMAV…AHGG, LTTL…LAWL, AIAL…LTSL, and LFAV…VLVW.

This sequence belongs to the CbiM family. In terms of assembly, forms an energy-coupling factor (ECF) transporter complex composed of an ATP-binding protein (A component, CbiO), a transmembrane protein (T component, CbiQ) and 2 possible substrate-capture proteins (S components, CbiM and CbiN) of unknown stoichimetry.

Its subcellular location is the cell inner membrane. It functions in the pathway cofactor biosynthesis; adenosylcobalamin biosynthesis. In terms of biological role, part of the energy-coupling factor (ECF) transporter complex CbiMNOQ involved in cobalt import. This is Cobalt transport protein CbiM from Thermosynechococcus vestitus (strain NIES-2133 / IAM M-273 / BP-1).